A 215-amino-acid chain; its full sequence is Large ribosomal subunit protein bL25 (215 aa).

Residues 1–10 (MAKSASNQLR) are compositionally biased toward polar residues. 2 disordered regions span residues 1–25 (MAKS…SRRA) and 187–215 (ELEG…GESE).

It belongs to the bacterial ribosomal protein bL25 family. CTC subfamily. In terms of assembly, part of the 50S ribosomal subunit; part of the 5S rRNA/L5/L18/L25 subcomplex. Contacts the 5S rRNA. Binds to the 5S rRNA independently of L5 and L18.

Its function is as follows. This is one of the proteins that binds to the 5S RNA in the ribosome where it forms part of the central protuberance. This Mycobacterium bovis (strain ATCC BAA-935 / AF2122/97) protein is Large ribosomal subunit protein bL25.